The following is a 221-amino-acid chain: MELEERRAALDVRRLPGLTPYAEAWELQRELVRKRRSGEIPDTLLLLEHPPVYTVGRAARDASNLGAGEEYLRSLGAEVFWSDRGGDATFHGPGQLVGYPIIRLKVRDTHRYLRDLEEVVIRALAGYGLEGRRHPRYTGVWVNGSKICAIGVKFSSGWIASHGFALNVNTDLSWFDRITPCGIREYGVTSLERELGREIPLAGVEREIVSGFREVLGDPGS.

One can recognise a BPL/LPL catalytic domain in the interval glycine 38–glycine 220. Substrate is bound by residues arginine 84 to histidine 91, alanine 149 to glycine 151, and glycine 163 to alanine 165. Cysteine 181 serves as the catalytic Acyl-thioester intermediate.

The protein belongs to the LipB family.

It is found in the cytoplasm. The catalysed reaction is octanoyl-[ACP] + L-lysyl-[protein] = N(6)-octanoyl-L-lysyl-[protein] + holo-[ACP] + H(+). It functions in the pathway protein modification; protein lipoylation via endogenous pathway; protein N(6)-(lipoyl)lysine from octanoyl-[acyl-carrier-protein]: step 1/2. Functionally, catalyzes the transfer of endogenously produced octanoic acid from octanoyl-acyl-carrier-protein onto the lipoyl domains of lipoate-dependent enzymes. Lipoyl-ACP can also act as a substrate although octanoyl-ACP is likely to be the physiological substrate. This chain is Octanoyltransferase, found in Rubrobacter xylanophilus (strain DSM 9941 / JCM 11954 / NBRC 16129 / PRD-1).